A 264-amino-acid chain; its full sequence is 3-methyl-2-oxobutanoate hydroxymethyltransferase (264 aa).

Residues Asp-45 and Asp-84 each coordinate Mg(2+). Residues 45-46 (DS), Asp-84, and Lys-113 contribute to the 3-methyl-2-oxobutanoate site. A Mg(2+)-binding site is contributed by Glu-115. The active-site Proton acceptor is Glu-182.

This sequence belongs to the PanB family. In terms of assembly, homodecamer; pentamer of dimers. The cofactor is Mg(2+).

It is found in the cytoplasm. The catalysed reaction is 3-methyl-2-oxobutanoate + (6R)-5,10-methylene-5,6,7,8-tetrahydrofolate + H2O = 2-dehydropantoate + (6S)-5,6,7,8-tetrahydrofolate. The protein operates within cofactor biosynthesis; (R)-pantothenate biosynthesis; (R)-pantoate from 3-methyl-2-oxobutanoate: step 1/2. In terms of biological role, catalyzes the reversible reaction in which hydroxymethyl group from 5,10-methylenetetrahydrofolate is transferred onto alpha-ketoisovalerate to form ketopantoate. The protein is 3-methyl-2-oxobutanoate hydroxymethyltransferase of Caldicellulosiruptor saccharolyticus (strain ATCC 43494 / DSM 8903 / Tp8T 6331).